A 179-amino-acid polypeptide reads, in one-letter code: Iron sulfur cluster assembly protein 1, mitochondrial (179 aa).

Residues 160 to 179 (RSVKQPTLGPEAAQAETIAT) form a disordered region.

Belongs to the NifU family. Component of the core Fe-S cluster (ISC) assembly machinery. The cofactor is [2Fe-2S] cluster.

It localises to the mitochondrion matrix. Its pathway is cofactor biosynthesis; iron-sulfur cluster biosynthesis. Functionally, scaffold protein for the de novo synthesis of iron-sulfur (Fe-S) clusters within mitochondria, which is required for maturation of both mitochondrial and cytoplasmic [2Fe-2S] and [4Fe-4S] proteins. First, a [2Fe-2S] cluster is transiently assembled on the scaffold protein ISU1. In a second step, the cluster is released from ISU1, transferred to a glutaredoxin, followed by the formation of mitochondrial [2Fe-2S] proteins, the synthesis of [4Fe-4S] clusters and their target-specific insertion into the recipient apoproteins. Cluster assembly on ISU1 depends on the function of the cysteine desulfurase complex NFS1-ISD11, which serves as the sulfur donor for cluster synthesis, the iron-binding protein frataxin as the putative iron donor, and the electron transfer chain comprised of ferredoxin reductase and ferredoxin, which receive their electrons from NADH. This chain is Iron sulfur cluster assembly protein 1, mitochondrial (ISU1), found in Debaryomyces hansenii (strain ATCC 36239 / CBS 767 / BCRC 21394 / JCM 1990 / NBRC 0083 / IGC 2968) (Yeast).